We begin with the raw amino-acid sequence, 356 residues long: Protein pelota homolog (356 aa).

This sequence belongs to the eukaryotic release factor 1 family. Pelota subfamily. Monomer. A divalent metal cation is required as a cofactor.

It is found in the cytoplasm. Functionally, may function in recognizing stalled ribosomes, interact with stem-loop structures in stalled mRNA molecules, and effect endonucleolytic cleavage of the mRNA. May play a role in the release non-functional ribosomes and degradation of damaged mRNAs. Has endoribonuclease activity. This is Protein pelota homolog from Aeropyrum pernix (strain ATCC 700893 / DSM 11879 / JCM 9820 / NBRC 100138 / K1).